The primary structure comprises 93 residues: Small ribosomal subunit protein uS15c (93 aa).

The protein belongs to the universal ribosomal protein uS15 family. Part of the 30S ribosomal subunit.

It localises to the plastid. The protein localises to the chloroplast. The chain is Small ribosomal subunit protein uS15c (rps15) from Jasminum nudiflorum (Winter jasmine).